The chain runs to 66 residues: Putative alpha-neurotoxin RjAa44 (66 aa).

The 60-residue stretch at 1–60 (KEGYPVDWGNCKYECMSDAYCKDLCADRKAKSGYCYKLNWSCYCEGLPDDSPIKTNGHCR) folds into the LCN-type CS-alpha/beta domain. 4 disulfides stabilise this stretch: C11-C59, C15-C35, C21-C42, and C25-C44.

The protein belongs to the long (4 C-C) scorpion toxin superfamily. Sodium channel inhibitor family. Alpha subfamily. Expressed by the venom gland.

The protein localises to the secreted. Functionally, alpha toxins bind voltage-independently at site-3 of sodium channels (Nav) and inhibit the inactivation of the activated channels, thereby blocking neuronal transmission. The chain is Putative alpha-neurotoxin RjAa44 from Rhopalurus junceus (Caribbean blue scorpion).